Reading from the N-terminus, the 77-residue chain is MSSIEKRVKEIVAEQLGVDEAQVTNDASFMDDLGADSLDTVELVMALEEEFDIEISDEDAEKIQNVQDAIDYITEHT.

Residues 2 to 77 (SSIEKRVKEI…DAIDYITEHT (76 aa)) form the Carrier domain. At Ser37 the chain carries O-(pantetheine 4'-phosphoryl)serine.

It belongs to the acyl carrier protein (ACP) family. 4'-phosphopantetheine is transferred from CoA to a specific serine of apo-ACP by AcpS. This modification is essential for activity because fatty acids are bound in thioester linkage to the sulfhydryl of the prosthetic group.

Its subcellular location is the cytoplasm. It participates in lipid metabolism; fatty acid biosynthesis. Functionally, carrier of the growing fatty acid chain in fatty acid biosynthesis. In Geobacter sulfurreducens (strain ATCC 51573 / DSM 12127 / PCA), this protein is Acyl carrier protein.